The primary structure comprises 922 residues: Centrosomal protein of 104 kDa (922 aa).

Positions 210-277 (EVAQIIRRLD…DLAKEKKQQM (68 aa)) form a coiled coil. The span at 307 to 318 (PLQPLASPSSPQ) shows a compositional bias: low complexity. Disordered regions lie at residues 307–333 (PLQPLASPSSPQHWKAVSSLPRTEELA) and 348–419 (LASS…PLTE). A compositionally biased stretch (basic and acidic residues) spans 396-407 (PEVREADSDVRR). 2 HEAT repeats span residues 526-564 (AIPLLLARTGDSSARLRVMALNFIQEMALFKEVRSLQLI) and 601-637 (GFTVDNVMKFAVSALEHRVYEVRETAVRIILDMYRQH). Composition is skewed to basic and acidic residues over residues 673–697 (TEAEGKTQKRVVTKEAEKQKKEETK) and 714–725 (QEKENEAVKLKN). Disordered regions lie at residues 673–741 (TEAE…TPEI) and 880–922 (PAPQ…HTRR). The stretch at 678–705 (KTQKRVVTKEAEKQKKEETKALQGLSAA) forms a coiled coil.

As to quaternary structure, interacts with CCP110 and CEP97. Interacts with ARMC9, TOGARAM1, CCDC66 and CSPP1. In terms of tissue distribution, expressed predominantly in the brain. Also detected, although at much lower levels, in the heart and the liver. Within the brain, expressed in the cerebral cortex, hippocampus, cerebellum and brainstem.

The protein localises to the cell projection. It is found in the cilium. It localises to the cytoplasm. Its subcellular location is the cytoskeleton. The protein resides in the microtubule organizing center. The protein localises to the centrosome. It is found in the centriole. It localises to the spindle pole. In terms of biological role, required for ciliogenesis and for structural integrity at the ciliary tip. The polypeptide is Centrosomal protein of 104 kDa (Cep104) (Rattus norvegicus (Rat)).